Consider the following 973-residue polypeptide: Translation initiation factor IF-2 (973 aa).

The tract at residues proline 52 to glutamate 388 is disordered. Composition is skewed to basic and acidic residues over residues glutamate 83–lysine 120, valine 128–arginine 148, glutamine 157–arginine 172, valine 186–phenylalanine 202, proline 210–alanine 246, arginine 272–proline 288, leucine 314–lysine 333, and lysine 343–arginine 360. Residues alanine 374 to proline 386 are compositionally biased toward low complexity. The 170-residue stretch at aspartate 472–lysine 641 folds into the tr-type G domain. Residues glycine 481–threonine 488 form a G1 region. Glycine 481–threonine 488 is a binding site for GTP. The interval glycine 506–histidine 510 is G2. The segment at aspartate 527–glycine 530 is G3. Residues aspartate 527–histidine 531 and asparagine 581–aspartate 584 each bind GTP. The segment at asparagine 581 to aspartate 584 is G4. The G5 stretch occupies residues serine 617–leucine 619.

The protein belongs to the TRAFAC class translation factor GTPase superfamily. Classic translation factor GTPase family. IF-2 subfamily.

The protein localises to the cytoplasm. One of the essential components for the initiation of protein synthesis. Protects formylmethionyl-tRNA from spontaneous hydrolysis and promotes its binding to the 30S ribosomal subunits. Also involved in the hydrolysis of GTP during the formation of the 70S ribosomal complex. The polypeptide is Translation initiation factor IF-2 (Pelotomaculum thermopropionicum (strain DSM 13744 / JCM 10971 / SI)).